Here is a 228-residue protein sequence, read N- to C-terminus: Deoxyribose-phosphate aldolase (228 aa).

The active-site Proton donor/acceptor is the D96. K157 serves as the catalytic Schiff-base intermediate with acetaldehyde. K185 serves as the catalytic Proton donor/acceptor.

The protein belongs to the DeoC/FbaB aldolase family. DeoC type 1 subfamily.

The protein resides in the cytoplasm. It carries out the reaction 2-deoxy-D-ribose 5-phosphate = D-glyceraldehyde 3-phosphate + acetaldehyde. Its pathway is carbohydrate degradation; 2-deoxy-D-ribose 1-phosphate degradation; D-glyceraldehyde 3-phosphate and acetaldehyde from 2-deoxy-alpha-D-ribose 1-phosphate: step 2/2. Catalyzes a reversible aldol reaction between acetaldehyde and D-glyceraldehyde 3-phosphate to generate 2-deoxy-D-ribose 5-phosphate. The chain is Deoxyribose-phosphate aldolase from Picosynechococcus sp. (strain ATCC 27264 / PCC 7002 / PR-6) (Agmenellum quadruplicatum).